The chain runs to 222 residues: Cytidylate kinase (222 aa).

Residue 11-19 (GPTASGKGT) participates in ATP binding.

It belongs to the cytidylate kinase family. Type 1 subfamily.

It is found in the cytoplasm. The catalysed reaction is CMP + ATP = CDP + ADP. It carries out the reaction dCMP + ATP = dCDP + ADP. This Cupriavidus necator (strain ATCC 17699 / DSM 428 / KCTC 22496 / NCIMB 10442 / H16 / Stanier 337) (Ralstonia eutropha) protein is Cytidylate kinase.